The sequence spans 271 residues: Formamidopyrimidine-DNA glycosylase (271 aa).

Residue Pro2 is the Schiff-base intermediate with DNA of the active site. Residue Glu3 is the Proton donor of the active site. The active-site Proton donor; for beta-elimination activity is Lys58. Residues His92, Arg111, and Lys152 each coordinate DNA. Residues Tyr237–Asn271 form an FPG-type zinc finger. The Proton donor; for delta-elimination activity role is filled by Arg261.

Belongs to the FPG family. As to quaternary structure, monomer. Requires Zn(2+) as cofactor.

The catalysed reaction is Hydrolysis of DNA containing ring-opened 7-methylguanine residues, releasing 2,6-diamino-4-hydroxy-5-(N-methyl)formamidopyrimidine.. It catalyses the reaction 2'-deoxyribonucleotide-(2'-deoxyribose 5'-phosphate)-2'-deoxyribonucleotide-DNA = a 3'-end 2'-deoxyribonucleotide-(2,3-dehydro-2,3-deoxyribose 5'-phosphate)-DNA + a 5'-end 5'-phospho-2'-deoxyribonucleoside-DNA + H(+). In terms of biological role, involved in base excision repair of DNA damaged by oxidation or by mutagenic agents. Acts as a DNA glycosylase that recognizes and removes damaged bases. Has a preference for oxidized purines, such as 7,8-dihydro-8-oxoguanine (8-oxoG). Has AP (apurinic/apyrimidinic) lyase activity and introduces nicks in the DNA strand. Cleaves the DNA backbone by beta-delta elimination to generate a single-strand break at the site of the removed base with both 3'- and 5'-phosphates. This Wolbachia pipientis wMel protein is Formamidopyrimidine-DNA glycosylase.